Here is a 411-residue protein sequence, read N- to C-terminus: Glycogen synthase kinase-3 homolog MsK-2 (411 aa).

Residues 74–358 form the Protein kinase domain; the sequence is YMAERAVGQG…ALEALVHPFF (285 aa). ATP-binding positions include 80–88 and lysine 103; that span reads VGQGSFGVV. The active-site Proton acceptor is aspartate 199. Tyrosine 234 is subject to Phosphotyrosine.

Belongs to the protein kinase superfamily. CMGC Ser/Thr protein kinase family. GSK-3 subfamily. As to expression, absent in leaves and petioles while a moderate expression is seen in the stems, roots, and nodes.

The enzyme catalyses L-seryl-[protein] + ATP = O-phospho-L-seryl-[protein] + ADP + H(+). The catalysed reaction is L-threonyl-[protein] + ATP = O-phospho-L-threonyl-[protein] + ADP + H(+). In Medicago sativa (Alfalfa), this protein is Glycogen synthase kinase-3 homolog MsK-2 (MSK-2).